Here is a 149-residue protein sequence, read N- to C-terminus: MSLKLHNLKPTPNSRPEKHRKGRGHAAGKGKQAGKGQSGQNKRKGHRLGFEGGQTPWFRRIGKRGFKNVNHVEYQVVNLSSLEERYSNNETVTLESLFERNLIRRSVELRPVKVLAKGKLTKKLTLQVHSVSQAAREAVEKAGGKVEEL.

The segment at 1–54 (MSLKLHNLKPTPNSRPEKHRKGRGHAAGKGKQAGKGQSGQNKRKGHRLGFEGGQ) is disordered. The segment covering 17–28 (EKHRKGRGHAAG) has biased composition (basic residues).

It belongs to the universal ribosomal protein uL15 family. Part of the 50S ribosomal subunit.

Functionally, binds to the 23S rRNA. The polypeptide is Large ribosomal subunit protein uL15 (Mycoplasmopsis synoviae (strain 53) (Mycoplasma synoviae)).